Reading from the N-terminus, the 68-residue chain is Pleurocidin-like peptide WF4 (68 aa).

Positions 1 to 22 are cleaved as a signal peptide; that stretch reads MKFTATFLMMFIFVLMVEPGEC. A propeptide spanning residues 48–68 is cleaved from the precursor; it reads GEQQDLDKRAVDEDPNVIVFE.

The protein belongs to the pleurocidin family.

The protein resides in the secreted. Functionally, antimicrobial peptide. The protein is Pleurocidin-like peptide WF4 (ple4) of Pseudopleuronectes americanus (Winter flounder).